Consider the following 286-residue polypeptide: Co-chaperone protein DjlA (286 aa).

At M1–K6 the chain is on the periplasmic side. The helical transmembrane segment at I7 to H31 threads the bilayer. Residues L32–K286 are Cytoplasmic-facing. The 67-residue stretch at D220–K286 folds into the J domain.

As to quaternary structure, homodimer.

The protein localises to the cell inner membrane. Its function is as follows. Regulatory DnaK co-chaperone. Direct interaction between DnaK and DjlA is needed for the induction of the wcaABCDE operon, involved in the synthesis of a colanic acid polysaccharide capsule, possibly through activation of the RcsB/RcsC phosphotransfer signaling pathway. The colanic acid capsule may help the bacterium survive conditions outside the host. The chain is Co-chaperone protein DjlA from Haemophilus ducreyi (strain 35000HP / ATCC 700724).